A 278-amino-acid chain; its full sequence is Sulfur carrier protein FdhD (278 aa).

Cysteine 121 (cysteine persulfide intermediate) is an active-site residue. 260-265 (FCKPGR) provides a ligand contact to Mo-bis(molybdopterin guanine dinucleotide).

The protein belongs to the FdhD family.

The protein localises to the cytoplasm. Functionally, required for formate dehydrogenase (FDH) activity. Acts as a sulfur carrier protein that transfers sulfur from IscS to the molybdenum cofactor prior to its insertion into FDH. This chain is Sulfur carrier protein FdhD, found in Salmonella heidelberg (strain SL476).